Consider the following 883-residue polypeptide: Probable ribonuclease ZC3H12C (883 aa).

2 disordered regions span residues 53-109 (QLSP…ISVE) and 139-158 (DFKP…PPDV). At Ser-230 the chain carries Phosphoserine. Residues 245–400 (LRPIVIDGSN…LGRHGPSLDN (156 aa)) enclose the RNase NYN domain. The C3H1-type zinc-finger motif lies at 410–435 (EHKKQPCPYGKKCTYGHKCKYYHPER). 3 disordered regions span residues 456–551 (AKTA…FPPQ), 680–738 (FHDP…KAPH), and 754–775 (SRLY…EGLG). Residues 466-477 (KSNSVPCSTKAD) show a composition bias toward polar residues. A compositionally biased stretch (basic and acidic residues) spans 503–515 (LEEKLPTKNKLET). The span at 517–542 (SVPSLVSIPATSTAKPQSTTSLSNGL) shows a compositional bias: polar residues. The segment covering 705–714 (HLALHLPHSA) has biased composition (low complexity).

Belongs to the ZC3H12 family. The cofactor is Mg(2+).

In terms of biological role, may function as RNase and regulate the levels of target RNA species. This chain is Probable ribonuclease ZC3H12C (ZC3H12C), found in Homo sapiens (Human).